Here is a 199-residue protein sequence, read N- to C-terminus: Small ribosomal subunit protein uS4 (199 aa).

The S4 RNA-binding domain maps to Ser94–Ile157.

This sequence belongs to the universal ribosomal protein uS4 family. As to quaternary structure, part of the 30S ribosomal subunit. Contacts protein S5. The interaction surface between S4 and S5 is involved in control of translational fidelity.

Its function is as follows. One of the primary rRNA binding proteins, it binds directly to 16S rRNA where it nucleates assembly of the body of the 30S subunit. In terms of biological role, with S5 and S12 plays an important role in translational accuracy. This is Small ribosomal subunit protein uS4 from Mycoplasma mobile (strain ATCC 43663 / 163K / NCTC 11711) (Mesomycoplasma mobile).